We begin with the raw amino-acid sequence, 258 residues long: Global transcriptional regulator CodY (258 aa).

Residues 1–156 (MSTLLSKTRR…SATIVGMELL (156 aa)) are GAF domain. The H-T-H motif DNA-binding region spans 204–223 (ASKIADKVGITRSVIVNALR).

Belongs to the CodY family.

The protein localises to the cytoplasm. Functionally, DNA-binding global transcriptional regulator which is involved in the adaptive response to starvation and acts by directly or indirectly controlling the expression of numerous genes in response to nutrient availability. During rapid exponential growth, CodY is highly active and represses genes whose products allow adaptation to nutrient depletion. This is Global transcriptional regulator CodY from Clostridium perfringens (strain SM101 / Type A).